Reading from the N-terminus, the 361-residue chain is tRNA 2-selenouridine synthase (361 aa).

Positions 14 to 137 (LIADTPIIDV…LRQTAIQATI (124 aa)) constitute a Rhodanese domain. Catalysis depends on cysteine 97, which acts as the S-selanylcysteine intermediate.

The protein belongs to the SelU family. In terms of assembly, monomer.

It carries out the reaction 5-methylaminomethyl-2-thiouridine(34) in tRNA + selenophosphate + (2E)-geranyl diphosphate + H2O + H(+) = 5-methylaminomethyl-2-selenouridine(34) in tRNA + (2E)-thiogeraniol + phosphate + diphosphate. It catalyses the reaction 5-methylaminomethyl-2-thiouridine(34) in tRNA + (2E)-geranyl diphosphate = 5-methylaminomethyl-S-(2E)-geranyl-thiouridine(34) in tRNA + diphosphate. The enzyme catalyses 5-methylaminomethyl-S-(2E)-geranyl-thiouridine(34) in tRNA + selenophosphate + H(+) = 5-methylaminomethyl-2-(Se-phospho)selenouridine(34) in tRNA + (2E)-thiogeraniol. The catalysed reaction is 5-methylaminomethyl-2-(Se-phospho)selenouridine(34) in tRNA + H2O = 5-methylaminomethyl-2-selenouridine(34) in tRNA + phosphate. Functionally, involved in the post-transcriptional modification of the uridine at the wobble position (U34) of tRNA(Lys), tRNA(Glu) and tRNA(Gln). Catalyzes the conversion of 2-thiouridine (S2U-RNA) to 2-selenouridine (Se2U-RNA). Acts in a two-step process involving geranylation of 2-thiouridine (S2U) to S-geranyl-2-thiouridine (geS2U) and subsequent selenation of the latter derivative to 2-selenouridine (Se2U) in the tRNA chain. In Escherichia coli O6:H1 (strain CFT073 / ATCC 700928 / UPEC), this protein is tRNA 2-selenouridine synthase.